Reading from the N-terminus, the 425-residue chain is Kynureninase (425 aa).

Pyridoxal 5'-phosphate contacts are provided by residues L105, T106, 133 to 136, D218, H221, and Y243; that span reads FPSD. Residue K244 is modified to N6-(pyridoxal phosphate)lysine. Pyridoxal 5'-phosphate-binding residues include W274 and N302.

This sequence belongs to the kynureninase family. In terms of assembly, homodimer. Pyridoxal 5'-phosphate is required as a cofactor.

It carries out the reaction L-kynurenine + H2O = anthranilate + L-alanine + H(+). The catalysed reaction is 3-hydroxy-L-kynurenine + H2O = 3-hydroxyanthranilate + L-alanine + H(+). Its pathway is amino-acid degradation; L-kynurenine degradation; L-alanine and anthranilate from L-kynurenine: step 1/1. It functions in the pathway cofactor biosynthesis; NAD(+) biosynthesis; quinolinate from L-kynurenine: step 2/3. In terms of biological role, catalyzes the cleavage of L-kynurenine (L-Kyn) and L-3-hydroxykynurenine (L-3OHKyn) into anthranilic acid (AA) and 3-hydroxyanthranilic acid (3-OHAA), respectively. This Flavobacterium psychrophilum (strain ATCC 49511 / DSM 21280 / CIP 103535 / JIP02/86) protein is Kynureninase.